The following is a 506-amino-acid chain: Maturase K (506 aa).

This sequence belongs to the intron maturase 2 family. MatK subfamily.

The protein localises to the plastid. It localises to the chloroplast. Its function is as follows. Usually encoded in the trnK tRNA gene intron. Probably assists in splicing its own and other chloroplast group II introns. This Arctostaphylos uva-ursi (Bearberry) protein is Maturase K.